Here is a 378-residue protein sequence, read N- to C-terminus: Putative glutamate--cysteine ligase 2 (378 aa).

It belongs to the glutamate--cysteine ligase type 2 family. YbdK subfamily.

The catalysed reaction is L-cysteine + L-glutamate + ATP = gamma-L-glutamyl-L-cysteine + ADP + phosphate + H(+). ATP-dependent carboxylate-amine ligase which exhibits weak glutamate--cysteine ligase activity. This is Putative glutamate--cysteine ligase 2 from Salinispora arenicola (strain CNS-205).